The sequence spans 218 residues: Uracil-DNA glycosylase (218 aa).

D60 functions as the Proton acceptor in the catalytic mechanism.

The protein belongs to the uracil-DNA glycosylase (UDG) superfamily. UNG family.

Its subcellular location is the cytoplasm. The catalysed reaction is Hydrolyzes single-stranded DNA or mismatched double-stranded DNA and polynucleotides, releasing free uracil.. Functionally, excises uracil residues from the DNA which can arise as a result of misincorporation of dUMP residues by DNA polymerase or due to deamination of cytosine. This Shewanella oneidensis (strain ATCC 700550 / JCM 31522 / CIP 106686 / LMG 19005 / NCIMB 14063 / MR-1) protein is Uracil-DNA glycosylase.